Reading from the N-terminus, the 288-residue chain is ATP synthase gamma chain (288 aa).

The protein belongs to the ATPase gamma chain family. F-type ATPases have 2 components, CF(1) - the catalytic core - and CF(0) - the membrane proton channel. CF(1) has five subunits: alpha(3), beta(3), gamma(1), delta(1), epsilon(1). CF(0) has three main subunits: a, b and c.

It localises to the cell membrane. Functionally, produces ATP from ADP in the presence of a proton gradient across the membrane. The gamma chain is believed to be important in regulating ATPase activity and the flow of protons through the CF(0) complex. The sequence is that of ATP synthase gamma chain from Staphylococcus aureus (strain bovine RF122 / ET3-1).